We begin with the raw amino-acid sequence, 113 residues long: Protein suex-1 (113 aa).

The first 22 residues, 1–22 (MQSLLVFCLATIILSNFTEASA), serve as a signal peptide directing secretion.

The chain is Protein suex-1 from Caenorhabditis elegans.